The chain runs to 468 residues: O-methyltransferase lcsG (468 aa).

The segment covering 1 to 12 (MGDNVQSDTTAA) has biased composition (polar residues). The interval 1-29 (MGDNVQSDTTAAQAGITDAPTAPTSAPVS) is disordered. Residues 298–299 (GG), Asp-321, 348–349 (DF), and Lys-363 contribute to the S-adenosyl-L-methionine site.

This sequence belongs to the class I-like SAM-binding methyltransferase superfamily. Cation-independent O-methyltransferase family.

It functions in the pathway secondary metabolite biosynthesis. Functionally, O-methyltransferase; part of the gene cluster that mediates the biosynthesis of the lipopeptide antibiotics leucinostatins that show extensive biological activities, including antimalarial, antiviral, antibacterial, antifungal, and antitumor activities, as well as phytotoxic. Leucinostatin A contains nine amino acid residues, including the unusual amino acid 4-methyl-L-proline (MePro), 2-amino-6-hydroxy-4-methyl-8-oxodecanoic acid (AHyMeOA), 3-hydroxyleucine (HyLeu), alpha-aminoisobutyric acid (AIB), beta-Ala, a 4-methylhex-2-enoic acid at the N-terminus as well as a N1,N1-dimethylpropane-1,2-diamine (DPD) at the C-terminus. The biosynthesis of leucinostatins is probably initiated with the assembly of 4-methylhex-2-enoic acid by a reducing PKS. Two reducing polyketide synthases, lcsB and lcsC, have been identified in the cluster and it is not clear which is the one that assembles 4-methylhex-2-enoic acid since both contain KS, AT, DH, cMT, ER, KR and ACP domains. The polyketide residue might be transferred to the NRPS lcsA, mediated by two additional enzymes, the acyl-CoA ligase lcsD and the thioesterase lcsE. The linear polyketide carboxylic acid, which is released from PKS, is converted to a CoA thioester by lcsD, and then lcsE hydrolyzes the thiol bond and shuttles the polyketide intermediate to lcsA. The C domain of the first module catalyzed the condensation of 4-methylhex-2-enoic acid and MePro carried by domain A1, followed by successive condensations of nine amino acids to trigger the elongation of the linear peptide. A5 and A6 domains of lcsA are proposed to incorporate leucine, A2 AHyMeOA, and A3 incorporates HyLeu. A4, A7 and A8 incorporate AIB. The AHyMeOA in leucinostatin A activated by the A2 might be produced by the second PKS (lcsB or lcsC) present within the cluster. The MePro is probably produced via leucine cyclization and may originate from a separate pathway, independent of the cluster. Another nonproteinogenic amino acid, beta-Ala, could be produced by an aspartic acid decarboxylase also localized outside of the cluster. Two candidates are VFPBJ_01400 and VFPBJ_10476. The final peptide scaffold may be released by the NAD(P)H-dependent thioester reductase (TE) at the C-terminal region of lcsA. Transamination of the lcsA product by the transaminase lcsP may produce DPD at the C-terminus. Further hydroxylation steps performed alternatively by the cytochrome P450 monooxygenases lcsI, lcsK and lcsN then yield the non-methylated leucinostatins precursor. It is also possible that leucines can be hydroxylated prior to their incorporation into the peptide. Varying extents of methylation then lead to the formation of leucinostatins A and B. The sequence is that of O-methyltransferase lcsG from Purpureocillium lilacinum (Paecilomyces lilacinus).